The chain runs to 110 residues: UPF0251 protein PH0803 (110 aa).

Belongs to the UPF0251 family.

This Pyrococcus horikoshii (strain ATCC 700860 / DSM 12428 / JCM 9974 / NBRC 100139 / OT-3) protein is UPF0251 protein PH0803.